The chain runs to 284 residues: 2-dehydro-3-deoxyphosphooctonate aldolase (284 aa).

It belongs to the KdsA family.

It is found in the cytoplasm. The enzyme catalyses D-arabinose 5-phosphate + phosphoenolpyruvate + H2O = 3-deoxy-alpha-D-manno-2-octulosonate-8-phosphate + phosphate. It participates in carbohydrate biosynthesis; 3-deoxy-D-manno-octulosonate biosynthesis; 3-deoxy-D-manno-octulosonate from D-ribulose 5-phosphate: step 2/3. The protein operates within bacterial outer membrane biogenesis; lipopolysaccharide biosynthesis. This Pseudoalteromonas translucida (strain TAC 125) protein is 2-dehydro-3-deoxyphosphooctonate aldolase.